Consider the following 225-residue polypeptide: Probable GTP-binding protein EngB (225 aa).

In terms of domain architecture, EngB-type G spans 31 to 204 (VGVEIAFAGR…LGILDSWCKP (174 aa)). GTP contacts are provided by residues 39 to 46 (GRSNAGKS), 65 to 69 (GRTQL), 83 to 86 (DLPG), 150 to 153 (TKAD), and 183 to 185 (FSS). Mg(2+)-binding residues include Ser46 and Thr67.

The protein belongs to the TRAFAC class TrmE-Era-EngA-EngB-Septin-like GTPase superfamily. EngB GTPase family. The cofactor is Mg(2+).

Functionally, necessary for normal cell division and for the maintenance of normal septation. This is Probable GTP-binding protein EngB from Shewanella pealeana (strain ATCC 700345 / ANG-SQ1).